A 604-amino-acid polypeptide reads, in one-letter code: Tyrosine-protein kinase transforming protein erbB (604 aa).

The Protein kinase domain maps to 132 to 399 (FKKVKVLGSG…KMARDPPRYL (268 aa)). ATP contacts are provided by residues 138–146 (LGSGAFGTI) and Lys165. Residue Asp257 is the Proton acceptor of the active site.

It belongs to the protein kinase superfamily. Tyr protein kinase family. EGF receptor subfamily.

The enzyme catalyses L-tyrosyl-[protein] + ATP = O-phospho-L-tyrosyl-[protein] + ADP + H(+). The v-erbB oncogene transforms avian fibroblasts and erythroblasts in culture and induces sarcomas and erythroleukemias in chickens. It is a truncated and mutated version of the receptor for epidermal growth factor. This is Tyrosine-protein kinase transforming protein erbB (V-ERBB) from Galliformes.